Consider the following 236-residue polypeptide: Osmoprotectant import permease protein OsmY (236 aa).

The next 6 helical transmembrane spans lie at 9–29, 47–67, 95–115, 126–146, 180–200, and 207–227; these read VLGFTIVILLLLALFIWGIGL, LMLVFTSMFFALLVGIPSGIL, VLALAMVIIGIGDTPAIVALF, TYAGLCSVPASLIEAANGIGM, PLAFLIGASSYGELIFPGIYL, and ILGATATALFALILDTLLAWF. The ABC transmembrane type-1 domain occupies 43-224; the sequence is GQRHLMLVFT…LFALILDTLL (182 aa).

Belongs to the binding-protein-dependent transport system permease family. As to quaternary structure, the complex is composed of two ATP-binding proteins (OsmV), two transmembrane proteins (OsmW and OsmY) and a solute-binding protein (OsmX).

It is found in the cell inner membrane. Functionally, part of the OsmU ABC transporter complex, which is involved in the uptake of osmoprotectants such as choline-O-sulfate and glycine betaine. Probably responsible for the translocation of the substrate across the membrane. The sequence is that of Osmoprotectant import permease protein OsmY (osmY) from Salmonella typhimurium (strain LT2 / SGSC1412 / ATCC 700720).